We begin with the raw amino-acid sequence, 297 residues long: Aspartate dehydrogenase domain-containing protein (297 aa).

Phosphoserine occurs at positions 24 and 172.

The protein belongs to the L-aspartate dehydrogenase family.

The polypeptide is Aspartate dehydrogenase domain-containing protein (Rattus norvegicus (Rat)).